Consider the following 72-residue polypeptide: uncharacterized protein (72 aa).

The segment at 52–72 (KGGRQRDEAVGVEELCKQHKE) is disordered. Positions 55-72 (RQRDEAVGVEELCKQHKE) are enriched in basic and acidic residues.

Belongs to the YiiE family.

This is an uncharacterized protein from Escherichia coli O6:H1 (strain CFT073 / ATCC 700928 / UPEC).